A 452-amino-acid chain; its full sequence is Phosphoglucosamine mutase (452 aa).

The active-site Phosphoserine intermediate is the Ser109. Residues Ser109, Asp248, Asp250, and Asp252 each coordinate Mg(2+). Ser109 carries the post-translational modification Phosphoserine.

It belongs to the phosphohexose mutase family. Mg(2+) is required as a cofactor. In terms of processing, activated by phosphorylation.

The enzyme catalyses alpha-D-glucosamine 1-phosphate = D-glucosamine 6-phosphate. Catalyzes the conversion of glucosamine-6-phosphate to glucosamine-1-phosphate. The sequence is that of Phosphoglucosamine mutase from Erythrobacter litoralis (strain HTCC2594).